The chain runs to 542 residues: Apolipoprotein N-acyltransferase (542 aa).

Transmembrane regions (helical) follow at residues 24-44 (VVAS…GLFA), 54-74 (VWCI…SWML), 85-105 (FVWG…SCLV), 116-136 (ALVW…YGLL), 160-180 (FFGW…CFAV), and 190-210 (GLWL…YEYL). Residues 220-499 (LRVAIVQPGY…TGVLQVSVPL (280 aa)) form the CN hydrolase domain. Catalysis depends on glutamate 264, which acts as the Proton acceptor. The active site involves lysine 349. The active-site Nucleophile is cysteine 404. The helical transmembrane segment at 509 to 529 (LGDAPLLLIAVCSVIGAIAYF) threads the bilayer.

This sequence belongs to the CN hydrolase family. Apolipoprotein N-acyltransferase subfamily.

Its subcellular location is the cell inner membrane. The enzyme catalyses N-terminal S-1,2-diacyl-sn-glyceryl-L-cysteinyl-[lipoprotein] + a glycerophospholipid = N-acyl-S-1,2-diacyl-sn-glyceryl-L-cysteinyl-[lipoprotein] + a 2-acyl-sn-glycero-3-phospholipid + H(+). It participates in protein modification; lipoprotein biosynthesis (N-acyl transfer). Catalyzes the phospholipid dependent N-acylation of the N-terminal cysteine of apolipoprotein, the last step in lipoprotein maturation. This chain is Apolipoprotein N-acyltransferase, found in Chlamydia trachomatis serovar D (strain ATCC VR-885 / DSM 19411 / UW-3/Cx).